Here is a 54-residue protein sequence, read N- to C-terminus: Potassium channel toxin alpha-KTx 14.1 (54 aa).

The signal sequence occupies residues 1-23 (MKIFFAILLILAVCSMAIWTVNG).

This sequence belongs to the short scorpion toxin superfamily. Potassium channel inhibitor family. Alpha-KTx 14 subfamily. Post-translationally, probably has three disulfide bridges. Expressed by the venom gland.

It localises to the secreted. Its function is as follows. Potential blocker of potassium channels. This is Potassium channel toxin alpha-KTx 14.1 from Olivierus martensii (Manchurian scorpion).